Consider the following 364-residue polypeptide: Probable UDP-arabinopyranose mutase 1 (364 aa).

The DXD motif signature appears at 103 to 105 (DDD). A glycan (N-linked (Glc...) arginine) is linked at arginine 151.

This sequence belongs to the RGP family. As to quaternary structure, homopentamer or homohexamer. It depends on Mn(2+) as a cofactor. Mg(2+) is required as a cofactor. In terms of processing, reversibly glycosylated by UDP-glucose, UDP-xylose and UDP-galactose, but not UDP-mannose.

It is found in the secreted. It localises to the cell wall. The protein localises to the cell junction. Its subcellular location is the plasmodesma. The protein resides in the golgi apparatus. The enzyme catalyses UDP-beta-L-arabinofuranose = UDP-beta-L-arabinopyranose. Its activity is regulated as follows. Inhibited by inhibitor protein (IP) which may be a form of sucrose synthase. Functionally, probable UDP-L-arabinose mutase involved in the biosynthesis of cell wall non-cellulosic polysaccharides. Was initially shown to possess an autoglycosylating activity which is dependent on the presence of UDP-glucose and manganese. This is Probable UDP-arabinopyranose mutase 1 from Pisum sativum (Garden pea).